The sequence spans 388 residues: MNLHEYQGKQLFAEYGLPVSKGFAVDTPEAAAEACDKIGGSEWVVKAQVHAGGRGKAGGVKLVRSKEDAKAFAAQWLGKRLVTYQTDANGQPVTKILVESCTDIAKELYLGAVVDRSSRRIVFMASTEGGVDIEKVAHETPEKIIKATIDPLVGAQPFQGRELAFQLGLEGKQVAQFAKIFVGLAKLFKEHDLALLEVNPLVIKADGDLHCLDAKINIDANAMYRQPKLKTFHDPSQDDPREAHAASFELNYVALEGNIGCMVNGAGLAMGTMDIVNLHGGKPANFLDVGGGATKERVTEAFKIILSDSNVAAVLVNIFGGIVRCDMIAEGIIGAVKEVGVKVPVVVRLEGNNAELGAKVLAESGLNIIAATSLTDAAQQVVKAAEGK.

Residues Lys-9–His-244 enclose the ATP-grasp domain. ATP is bound by residues Lys-46, Gly-53–Gly-55, Glu-99, Thr-102, and Glu-107. The Mg(2+) site is built by Asn-199 and Asp-213. Residues Asn-264 and Gly-321 to Val-323 each bind substrate.

The protein belongs to the succinate/malate CoA ligase beta subunit family. As to quaternary structure, heterotetramer of two alpha and two beta subunits. Mg(2+) is required as a cofactor.

It catalyses the reaction succinate + ATP + CoA = succinyl-CoA + ADP + phosphate. The catalysed reaction is GTP + succinate + CoA = succinyl-CoA + GDP + phosphate. It participates in carbohydrate metabolism; tricarboxylic acid cycle; succinate from succinyl-CoA (ligase route): step 1/1. Functionally, succinyl-CoA synthetase functions in the citric acid cycle (TCA), coupling the hydrolysis of succinyl-CoA to the synthesis of either ATP or GTP and thus represents the only step of substrate-level phosphorylation in the TCA. The beta subunit provides nucleotide specificity of the enzyme and binds the substrate succinate, while the binding sites for coenzyme A and phosphate are found in the alpha subunit. This chain is Succinate--CoA ligase [ADP-forming] subunit beta, found in Pseudomonas putida (strain GB-1).